Consider the following 418-residue polypeptide: Protein fuzzy homolog (418 aa).

This sequence belongs to the fuzzy family. As to quaternary structure, component of the CPLANE (ciliogenesis and planar polarity effectors) complex, composed of INTU, FUZ and WDPCP. Interacts with CPLANE2. Interacts with CPLANE1.

The protein localises to the cytoplasm. The protein resides in the cytoskeleton. It is found in the cilium basal body. In terms of biological role, probable planar cell polarity effector involved in cilium biogenesis. May regulate protein and membrane transport to the cilium. Proposed to function as core component of the CPLANE (ciliogenesis and planar polarity effectors) complex involved in the recruitment of peripheral IFT-A proteins to basal bodies. May regulate the morphogenesis of hair follicles which depends on functional primary cilia. Binds phosphatidylinositol 3-phosphate with highest affinity, followed by phosphatidylinositol 4-phosphate and phosphatidylinositol 5-phosphate. This is Protein fuzzy homolog (FUZ) from Homo sapiens (Human).